We begin with the raw amino-acid sequence, 291 residues long: 3-hydroxy-5-phosphonooxypentane-2,4-dione thiolase (291 aa).

Residue Lys203 is the Schiff-base intermediate with substrate of the active site.

It belongs to the DeoC/FbaB aldolase family. Homodecamer.

Its subcellular location is the cytoplasm. The enzyme catalyses dihydroxyacetone phosphate + acetyl-CoA = 3-hydroxy-2,4-dioxopentyl phosphate + CoA. In terms of biological role, involved in the degradation of phospho-AI-2, thereby terminating induction of the lsr operon and closing the AI-2 signaling cycle. Catalyzes the transfer of an acetyl moiety from 3-hydroxy-5-phosphonooxypentane-2,4-dione to CoA to form glycerone phosphate and acetyl-CoA. In Yersinia enterocolitica serotype O:8 / biotype 1B (strain NCTC 13174 / 8081), this protein is 3-hydroxy-5-phosphonooxypentane-2,4-dione thiolase.